Consider the following 581-residue polypeptide: MKSHIQSLLEQTIESFKQQGILPADFEARIQVDRTKDKSHGDLATNLAMMLTKAAGKNPRELAQLIIDNLPASAYVAKVEIAGPGFINFFIDDSALANQLQAAISDEHLGIKLPTPQTIVVDYSSPNLAKEMHVGHLRSTIIGDSVVRTLEFLGHKVIRQNHVGDWGTQFGMLLAYMEELRAQNGEQAQLELSDLETFYRAAKLRFDESAEFATRARQLVVELQSGDEYCNKLWREFNDISLSHCHEVYERLGVSLTRADVHGESAYNADLEQVVKDLDAQGLLTQSNGAKVVFQEEFRNKEGEALPVIIQKADGGYLYATTDLAAMRYRSSVLKADRVLYFVDLRQALHFQQVFSLAKLAKFVRNDMSLEHLGFGTMNGEDGRPFKTRTGGVVKLVDLLDEANTRALELVRSKNPDMDEATLAEIARVVGISAVKYADLSKNRTSDYIFSFEQMLSFEGNTAPYLLYAYTRVAGIFKRATDIDLSQAKIVLEHEKEKDLGNKLAQFGEILSRVIDKGQPHVLCGYLYELAGAFSSFYEACPVLAADNDEQKHSRLLLSQLTANTLQKGLNLLGIETLERM.

Positions P126–H136 match the 'HIGH' region motif.

This sequence belongs to the class-I aminoacyl-tRNA synthetase family. As to quaternary structure, monomer.

The protein localises to the cytoplasm. It carries out the reaction tRNA(Arg) + L-arginine + ATP = L-arginyl-tRNA(Arg) + AMP + diphosphate. The chain is Arginine--tRNA ligase from Shewanella sp. (strain MR-4).